The sequence spans 295 residues: Protoheme IX farnesyltransferase (295 aa).

Over 1–9 the chain is Cytoplasmic; it reads MSVKHFIQI. Residues 10–28 traverse the membrane as a helical segment; that stretch reads TKPGIIFGNVLSVAGGFFL. Residues 29–37 lie on the Periplasmic side of the membrane; the sequence is ASKGHVDFA. The helical transmembrane segment at 38–56 threads the bilayer; it reads LFLAVVIGTSLVVASGCVF. Residues 57-78 lie on the Cytoplasmic side of the membrane; it reads NNCIDRDIDHKMERTKNRVMVQ. The chain crosses the membrane as a helical span at residues 79-97; that stretch reads GGMSLPLALIYATLLGVAG. Topologically, residues 98–107 are periplasmic; sequence FSLLYVQANP. Residues 108–126 traverse the membrane as a helical segment; the sequence is LSAFCALIGFIVYVGFYSL. Residues 127-197 lie on the Cytoplasmic side of the membrane; it reads WLKRKSVHGT…YSAANIPVLP (71 aa). The chain crosses the membrane as a helical span at residues 198 to 216; the sequence is VARGILAAKKQIVLYVLAF. At 217–228 the chain is on the periplasmic side; it reads VLATLMLTLGGY. A helical transmembrane segment spans residues 229-247; sequence AGLGYLAVAAAMGLYWLYM. Over 248–268 the chain is Cytoplasmic; it reads AWGGYKAEDDSKWARKVFGFS. The helical transmembrane segment at 269–287 threads the bilayer; it reads ILTVTALSVMMGVDSQTAA. The Periplasmic portion of the chain corresponds to 288–295; it reads DVLMTYAR.

The protein belongs to the UbiA prenyltransferase family. Mg(2+) serves as cofactor. Requires Ca(2+) as cofactor.

The protein localises to the cell inner membrane. The enzyme catalyses heme b + (2E,6E)-farnesyl diphosphate + H2O = Fe(II)-heme o + diphosphate. Functionally, converts protoheme IX and farnesyl diphosphate to heme O. The sequence is that of Protoheme IX farnesyltransferase (cyoE) from Pseudomonas putida (Arthrobacter siderocapsulatus).